The primary structure comprises 175 residues: Cell division protein SepF (175 aa).

Positions 20–29 (RYEDYDDYDD) are enriched in acidic residues. A disordered region spans residues 20 to 88 (RYEDYDDYDD…ERPTPPLRVT (69 aa)). 2 stretches are compositionally biased toward basic and acidic residues: residues 30–47 (AEPH…DLGS) and 54–73 (RRMD…RRVS).

It belongs to the SepF family. In terms of assembly, homodimer. Interacts with FtsZ.

Its subcellular location is the cytoplasm. Cell division protein that is part of the divisome complex and is recruited early to the Z-ring. Probably stimulates Z-ring formation, perhaps through the cross-linking of FtsZ protofilaments. Its function overlaps with FtsA. In Acidothermus cellulolyticus (strain ATCC 43068 / DSM 8971 / 11B), this protein is Cell division protein SepF.